A 144-amino-acid chain; its full sequence is Large ribosomal subunit protein uL16 (144 aa).

The protein belongs to the universal ribosomal protein uL16 family. Part of the 50S ribosomal subunit.

Binds 23S rRNA and is also seen to make contacts with the A and possibly P site tRNAs. This chain is Large ribosomal subunit protein uL16, found in Acidobacterium capsulatum (strain ATCC 51196 / DSM 11244 / BCRC 80197 / JCM 7670 / NBRC 15755 / NCIMB 13165 / 161).